Reading from the N-terminus, the 223-residue chain is uncharacterized protein (223 aa).

Residues 1 to 22 (MHLKKALCPALCTFLIHLCLHA) form the signal peptide. Positions 30 to 204 (DIFLMIDKSR…RSIAAAHSKR (175 aa)) constitute a VWFA domain. The interval 199-223 (AAHSKRPTPTPPAKESSPRYTPSLD) is disordered.

This is an uncharacterized protein from Treponema pallidum (strain Nichols).